A 305-amino-acid polypeptide reads, in one-letter code: ATP synthase gamma chain (305 aa).

The protein belongs to the ATPase gamma chain family. As to quaternary structure, F-type ATPases have 2 components, CF(1) - the catalytic core - and CF(0) - the membrane proton channel. CF(1) has five subunits: alpha(3), beta(3), gamma(1), delta(1), epsilon(1). CF(0) has three main subunits: a, b and c.

It localises to the cell membrane. Functionally, produces ATP from ADP in the presence of a proton gradient across the membrane. The gamma chain is believed to be important in regulating ATPase activity and the flow of protons through the CF(0) complex. This is ATP synthase gamma chain from Streptomyces avermitilis (strain ATCC 31267 / DSM 46492 / JCM 5070 / NBRC 14893 / NCIMB 12804 / NRRL 8165 / MA-4680).